We begin with the raw amino-acid sequence, 129 residues long: Holo-[acyl-carrier-protein] synthase (129 aa).

Residues aspartate 8 and glutamate 58 each contribute to the Mg(2+) site.

The protein belongs to the P-Pant transferase superfamily. AcpS family. It depends on Mg(2+) as a cofactor.

It localises to the cytoplasm. The enzyme catalyses apo-[ACP] + CoA = holo-[ACP] + adenosine 3',5'-bisphosphate + H(+). Its function is as follows. Transfers the 4'-phosphopantetheine moiety from coenzyme A to a Ser of acyl-carrier-protein. The sequence is that of Holo-[acyl-carrier-protein] synthase from Acidithiobacillus ferrooxidans (strain ATCC 53993 / BNL-5-31) (Leptospirillum ferrooxidans (ATCC 53993)).